The chain runs to 505 residues: Dolichyl pyrophosphate Glc1Man9GlcNAc2 alpha-1,3-glucosyltransferase (505 aa).

The Lumenal segment spans residues 1–3 (MAE). Residues 4–24 (IYPSLVQCAIVATAFKVLLFP) form a helical membrane-spanning segment. The Cytoplasmic portion of the chain corresponds to 25 to 101 (AYKSTDFEVH…DSWQTVYFQR (77 aa)). A helical transmembrane segment spans residues 102–122 (WTVIVTELVLLYALQMFVDST). Topologically, residues 123–128 (PGVSKR) are lumenal. The chain crosses the membrane as a helical span at residues 129–149 (AAHAAAVSILLSPGLLIIDHI). Over 150-152 (HFQ) the chain is Cytoplasmic. A helical transmembrane segment spans residues 153–169 (YNGVMYGILIASLVLAK). The Lumenal portion of the chain corresponds to 170 to 173 (KKSS). Residues 174 to 194 (LLASGLVFAALLCMKHIYLYL) traverse the membrane as a helical segment. Topologically, residues 195–224 (APAYFVYLLRVYCLPPKLSPRSIFRIQFFN) are cytoplasmic. The helical transmembrane segment at 225–245 (CVKLGGGIAAIFAAAFGPFAL) threads the bilayer. Topologically, residues 246-319 (KNQIPQIFSR…TSFAVLPDIT (74 aa)) are lumenal. The helical transmembrane segment at 320 to 340 (PRMCFVLTLLFQAIPLIKLFM) threads the bilayer. Residues 341 to 359 (RPTWEGFIGGVTLCGYASF) are Cytoplasmic-facing. A helical transmembrane segment spans residues 360–380 (LFGWHVHEKAILLVIIPFSLI). The Lumenal segment spans residues 381 to 386 (ALKDRR). A helical transmembrane segment spans residues 387–407 (YLGAFRPLAVAGHVSLFPLIF). Over 408–409 (TP) the chain is Cytoplasmic. A helical membrane pass occupies residues 410-430 (AEFPIKTVYTIFWLVLFLMAF). Over 431 to 450 (DRLAPAPTRQRLFLFDRFST) the chain is Lumenal. Residues 451 to 471 (AYITVSIPLIFYCSLMHGIIF) traverse the membrane as a helical segment. Residues 472-480 (GKSYEFLPL) lie on the Cytoplasmic side of the membrane. The chain crosses the membrane as a helical span at residues 481 to 501 (MFTSSYSAIGVVGSWLGFMVV). At 502–505 (YFTE) the chain is on the lumenal side.

Belongs to the ALG6/ALG8 glucosyltransferase family.

It localises to the endoplasmic reticulum membrane. It carries out the reaction an alpha-D-Glc-(1-&gt;3)-alpha-D-Man-(1-&gt;2)-alpha-D-Man-(1-&gt;2)-alpha-D-Man-(1-&gt;3)-[alpha-D-Man-(1-&gt;2)-alpha-D-Man-(1-&gt;3)-[alpha-D-Man-(1-&gt;2)-alpha-D-Man-(1-&gt;6)]-alpha-D-Man-(1-&gt;6)]-beta-D-Man-(1-&gt;4)-beta-D-GlcNAc-(1-&gt;4)-alpha-D-GlcNAc-diphospho-di-trans,poly-cis-dolichol + a di-trans,poly-cis-dolichyl beta-D-glucosyl phosphate = an alpha-D-Glc-(1-&gt;3)-alpha-D-Glc-(1-&gt;3)-alpha-D-Man-(1-&gt;2)-alpha-D-Man-(1-&gt;2)-alpha-D-Man-(1-&gt;3)-[alpha-D-Man-(1-&gt;2)-alpha-D-Man-(1-&gt;3)-[alpha-D-Man-(1-&gt;2)-alpha-D-Man-(1-&gt;6)]-alpha-D-Man-(1-&gt;6)]-beta-D-Man-(1-&gt;4)-beta-D-GlcNAc-(1-&gt;4)-alpha-D-GlcNAc-diphospho-di-trans,poly-cis-dolichol + a di-trans,poly-cis-dolichyl phosphate + H(+). It participates in protein modification; protein glycosylation. Functionally, dolichyl pyrophosphate Glc1Man9GlcNAc2 alpha-1,3-glucosyltransferase that operates in the biosynthetic pathway of dolichol-linked oligosaccharides, the glycan precursors employed in protein asparagine (N)-glycosylation. The assembly of dolichol-linked oligosaccharides begins on the cytosolic side of the endoplasmic reticulum membrane and finishes in its lumen. The sequential addition of sugars to dolichol pyrophosphate produces dolichol-linked oligosaccharides containing fourteen sugars, including two GlcNAcs, nine mannoses and three glucoses. Once assembled, the oligosaccharide is transferred from the lipid to nascent proteins by oligosaccharyltransferases. In the lumen of the endoplasmic reticulum, adds the second glucose residue from dolichyl phosphate glucose (Dol-P-Glc) onto the lipid-linked oligosaccharide intermediate Glc(1)Man(9)GlcNAc(2)-PP-Dol to produce Glc(2)Man(9)GlcNAc(2)-PP-Dol. This chain is Dolichyl pyrophosphate Glc1Man9GlcNAc2 alpha-1,3-glucosyltransferase (alg-8), found in Neurospora crassa (strain ATCC 24698 / 74-OR23-1A / CBS 708.71 / DSM 1257 / FGSC 987).